Consider the following 587-residue polypeptide: Putative adhesin (587 aa).

An N-terminal signal peptide occupies residues 1-19 (MKFAISTLLIILQAAAVFA). A disulfide bond links C211 and C261. An N-linked (GlcNAc...) asparagine glycan is attached at N239. 4 repeat units span residues 432–455 (IVTV…TYTK), 466–489 (IVTV…TYTK), 491–512 (PEIV…YHDV), and 513–531 (PEVV…TTTY). Residues 432-531 (IVTVITKEGG…EGGEKVTTTY (100 aa)) form a 4 X 24 AA approximate tandem repeats, Thr-rich region. S562 carries GPI-anchor amidated serine lipidation. Positions 563–587 (EAQVNLGSKSAVGLLAIVPMLFLAI) are cleaved as a propeptide — removed in mature form.

In terms of processing, the GPI-anchor is attached to the protein in the endoplasmic reticulum and serves to target the protein to the cell surface. There, the glucosamine-inositol phospholipid moiety is cleaved off and the GPI-modified mannoprotein is covalently attached via its lipidless GPI glycan remnant to the 1,6-beta-glucan of the outer cell wall layer.

It localises to the cell membrane. The protein resides in the secreted. Its subcellular location is the cell wall. Functionally, putative adhesion protein. May be involved in cell-cell interaction, interacting with other proteins by salt bridges and hydrogen bonds. The sequence is that of Putative adhesin from Komagataella phaffii (strain ATCC 76273 / CBS 7435 / CECT 11047 / NRRL Y-11430 / Wegner 21-1) (Yeast).